An 881-amino-acid polypeptide reads, in one-letter code: Squamosa promoter-binding-like protein 1 (881 aa).

Residues Phe-49 to Lys-69 form a disordered region. The span at Asn-53–Ser-62 shows a compositional bias: low complexity. Residues Pro-96 to Asn-187 are sufficient and necessary for DNA binding. The SBP-type zinc finger occupies Gly-103–Thr-180. Residues Cys-106, Cys-111, Cys-128, His-131, Cys-147, Cys-150, His-154, and Cys-166 each contribute to the Zn(2+) site. The Bipartite nuclear localization signal signature appears at Lys-163–Lys-179. Basic residues predominate over residues Leu-170 to Lys-179. Disordered regions lie at residues Leu-170–Asp-193 and Phe-274–Gln-358. A compositionally biased stretch (polar residues) spans Ser-275–Glu-284. Residues Asn-285–Asp-295 are compositionally biased toward basic and acidic residues. A compositionally biased stretch (polar residues) spans Pro-319–Thr-338. The span at Ser-339–Asp-356 shows a compositional bias: low complexity.

Requires Zn(2+) as cofactor.

Its subcellular location is the nucleus. Functionally, trans-acting factor that binds specifically to the consensus nucleotide sequence 5'-TNCGTACAA-3' of AP1 promoter. Binds specifically to the 5'-GTAC-3' core sequence. This chain is Squamosa promoter-binding-like protein 1 (SPL1), found in Arabidopsis thaliana (Mouse-ear cress).